The following is a 94-amino-acid chain: Alpha-conotoxin Cp20.3 (94 aa).

A signal peptide spans 1 to 24; that stretch reads MPKLAVVLLVLLILPLSYFDAAGG. The propeptide occupies 25-45; the sequence is QAVQGDRRGNGLARYLQRGDR. Residue Glu-46 is modified to 4-carboxyglutamate; partial. Glu-49 is modified (4-carboxyglutamate). Pro-55 is modified (4-hydroxyproline). 4 disulfides stabilise this stretch: Cys-63-Cys-72, Cys-68-Cys-80, Cys-73-Cys-90, and Cys-78-Cys-92.

The protein belongs to the conotoxin D superfamily. In terms of assembly, hetero-, homo- or pseudo-homodimer (identical sequence, different post-translational modifications). In terms of tissue distribution, expressed by the venom duct.

It localises to the secreted. In terms of biological role, alpha-D-conopeptides act on postsynaptic membranes, they bind to the nicotinic acetylcholine receptors (nAChR) and thus inhibit them. Through its two C-terminal domains, this homodimeric protein would bind to two nAChR allosteric sites, located outside the nAChR C-loop of the principal binding face and at the adjacent binding interface in a clockwise direction. This toxin specifically blocks mammalian neuronal nAChR of the alpha-7/CHRNA7 (IC(50)=0.25 nM), alpha-3-beta-2/CHRNA3-CHRNB2 (IC(50)=2.8 nM), and alpha-4-beta-2/CHRNA4-CHRNB2 (IC(50)=28.6 nM) subtypes. Has no effect on alpha-3-beta-4/CHRNA3-CHRNB4, alpha-4-beta-4/CHRNA4-CHRNB4 and alpha-1-beta-1-epsilon-delta/CHRNA1-CHRNB1-CHRNE-CHRND subtypes of nAChRs. In Conus capitaneus (Captain cone), this protein is Alpha-conotoxin Cp20.3.